Reading from the N-terminus, the 963-residue chain is Protein translocase subunit SecA (963 aa).

ATP is bound by residues Q87, 105-109 (GEGKT), and D524. C946, C948, C957, and H958 together coordinate Zn(2+).

The protein belongs to the SecA family. In terms of assembly, monomer and homodimer. Part of the essential Sec protein translocation apparatus which comprises SecA, SecYEG and auxiliary proteins SecDF-YajC and YidC. Zn(2+) serves as cofactor.

The protein resides in the cell inner membrane. It localises to the cytoplasm. It carries out the reaction ATP + H2O + cellular proteinSide 1 = ADP + phosphate + cellular proteinSide 2.. Its function is as follows. Part of the Sec protein translocase complex. Interacts with the SecYEG preprotein conducting channel. Has a central role in coupling the hydrolysis of ATP to the transfer of proteins into and across the cell membrane, serving both as a receptor for the preprotein-SecB complex and as an ATP-driven molecular motor driving the stepwise translocation of polypeptide chains across the membrane. The polypeptide is Protein translocase subunit SecA (Methylobacterium radiotolerans (strain ATCC 27329 / DSM 1819 / JCM 2831 / NBRC 15690 / NCIMB 10815 / 0-1)).